Reading from the N-terminus, the 168-residue chain is tRNA-splicing endonuclease subunit Sen15 (168 aa).

The interval 1-32 (MEERSDSEPTPGCSGPGPAPVRDGGGAHTWAP) is disordered. S7 and S165 each carry phosphoserine.

The protein belongs to the SEN15 family. Homodimer. tRNA splicing endonuclease is a heterotetramer composed of TSEN2, TSEN15, TSEN34/LENG5 and TSEN54. tRNA splicing endonuclease complex also contains proteins of the pre-mRNA 3' end processing machinery such as CLP1, CPSF1, CPSF4 and CSTF2.

The protein localises to the nucleus. It localises to the nucleolus. In terms of biological role, non-catalytic subunit of the tRNA-splicing endonuclease complex, a complex responsible for identification and cleavage of the splice sites in pre-tRNA. It cleaves pre-tRNA at the 5' and 3' splice sites to release the intron. The products are an intron and two tRNA half-molecules bearing 2',3' cyclic phosphate and 5'-OH termini. There are no conserved sequences at the splice sites, but the intron is invariably located at the same site in the gene, placing the splice sites an invariant distance from the constant structural features of the tRNA body. The tRNA splicing endonuclease is also involved in mRNA processing via its association with pre-mRNA 3'-end processing factors, establishing a link between pre-tRNA splicing and pre-mRNA 3'-end formation, suggesting that the endonuclease subunits function in multiple RNA-processing events. The polypeptide is tRNA-splicing endonuclease subunit Sen15 (Tsen15) (Mus musculus (Mouse)).